A 795-amino-acid polypeptide reads, in one-letter code: Levansucrase (795 aa).

The N-terminal stretch at M1–A36 is a signal peptide. 2 stretches are compositionally biased toward polar residues: residues T42–E66 and Q112–N130. Disordered stretches follow at residues T42–A83 and E103–E138. Sucrose contacts are provided by W245, D246, and S315. D246 acts as the Nucleophile in catalysis. D394 is a Ca(2+) binding site. Sucrose contacts are provided by R399 and D400. Ca(2+) contacts are provided by Q425, N464, and D496. Sucrose is bound at residue E497. E499 serves as the catalytic Proton donor/acceptor. R517 provides a ligand contact to sucrose. The helical transmembrane segment at G774–F794 threads the bilayer.

The protein belongs to the glycosyl hydrolase 68 family.

It is found in the cell membrane. It localises to the cell surface. It catalyses the reaction [6)-beta-D-fructofuranosyl-(2-&gt;](n) alpha-D-glucopyranoside + sucrose = [6)-beta-D-fructofuranosyl-(2-&gt;](n+1) alpha-D-glucopyranoside + D-glucose. Ca(2+) may play an important structural role and promote stability of levansucrase. Catalyzes the synthesis of levan, a fructose polymer, by transferring the fructosyl moiety from sucrose to a growing acceptor molecule. Also displays sucrose hydrolase activity. This chain is Levansucrase, found in Streptococcus mutans serotype c (strain ATCC 700610 / UA159).